Here is a 93-residue protein sequence, read N- to C-terminus: Ferredoxin-2 (93 aa).

One can recognise a 2Fe-2S ferredoxin-type domain in the interval 2 to 91 (YKVTLKTPDG…DVVIETHKED (90 aa)). [2Fe-2S] cluster-binding residues include cysteine 37, cysteine 42, cysteine 45, and cysteine 75.

It belongs to the 2Fe2S plant-type ferredoxin family. The cofactor is [2Fe-2S] cluster.

The protein localises to the plastid. Its subcellular location is the chloroplast. Functionally, ferredoxins are iron-sulfur proteins that transfer electrons in a wide variety of metabolic reactions. The sequence is that of Ferredoxin-2 from Equisetum arvense (Field horsetail).